The chain runs to 179 residues: Ribulose bisphosphate carboxylase small subunit, chloroplastic 1/4 (179 aa).

A chloroplast-targeting transit peptide spans 1-58; sequence MAASSTMLSSVATAACAAPAQASMVAPFVGLKSTSAFPVTQKPATGLSTLPSNGGRVQ.

The protein belongs to the RuBisCO small chain family. In terms of assembly, heterohexadecamer of 8 large and 8 small subunits.

The protein localises to the plastid. It is found in the chloroplast. Functionally, ruBisCO catalyzes two reactions: the carboxylation of D-ribulose 1,5-bisphosphate, the primary event in carbon dioxide fixation, as well as the oxidative fragmentation of the pentose substrate. Both reactions occur simultaneously and in competition at the same active site. Although the small subunit is not catalytic it is essential for maximal activity. In Fritillaria agrestis (Stinkbells), this protein is Ribulose bisphosphate carboxylase small subunit, chloroplastic 1/4 (RBCS1).